The chain runs to 338 residues: DNA-directed RNA polymerase subunit alpha (338 aa).

An alpha N-terminal domain (alpha-NTD) region spans residues 1–234 (MIHKNWAELI…DQLSIFVNFE (234 aa)). Positions 250–338 (FNPLLLKKVD…DLAKRFEDQF (89 aa)) are alpha C-terminal domain (alpha-CTD).

It belongs to the RNA polymerase alpha chain family. In terms of assembly, homodimer. The RNAP catalytic core consists of 2 alpha, 1 beta, 1 beta' and 1 omega subunit. When a sigma factor is associated with the core the holoenzyme is formed, which can initiate transcription.

It carries out the reaction RNA(n) + a ribonucleoside 5'-triphosphate = RNA(n+1) + diphosphate. In terms of biological role, DNA-dependent RNA polymerase catalyzes the transcription of DNA into RNA using the four ribonucleoside triphosphates as substrates. The protein is DNA-directed RNA polymerase subunit alpha of Cereibacter sphaeroides (strain ATCC 17029 / ATH 2.4.9) (Rhodobacter sphaeroides).